We begin with the raw amino-acid sequence, 285 residues long: Bifunctional protein FolD (285 aa).

NADP(+) contacts are provided by residues 166 to 168 (GAS), S191, and I232.

Belongs to the tetrahydrofolate dehydrogenase/cyclohydrolase family. As to quaternary structure, homodimer.

It catalyses the reaction (6R)-5,10-methylene-5,6,7,8-tetrahydrofolate + NADP(+) = (6R)-5,10-methenyltetrahydrofolate + NADPH. It carries out the reaction (6R)-5,10-methenyltetrahydrofolate + H2O = (6R)-10-formyltetrahydrofolate + H(+). Its pathway is one-carbon metabolism; tetrahydrofolate interconversion. In terms of biological role, catalyzes the oxidation of 5,10-methylenetetrahydrofolate to 5,10-methenyltetrahydrofolate and then the hydrolysis of 5,10-methenyltetrahydrofolate to 10-formyltetrahydrofolate. The sequence is that of Bifunctional protein FolD from Actinobacillus pleuropneumoniae serotype 7 (strain AP76).